The sequence spans 197 residues: Small ribosomal subunit protein uS4B (197 aa).

Residues Ser-88–Asn-150 enclose the S4 RNA-binding domain.

It belongs to the universal ribosomal protein uS4 family. In terms of assembly, part of the 30S ribosomal subunit. Contacts protein S5. The interaction surface between S4 and S5 is involved in control of translational fidelity.

In terms of biological role, one of the primary rRNA binding proteins, it binds directly to 16S rRNA where it nucleates assembly of the body of the 30S subunit. With S5 and S12 plays an important role in translational accuracy. In Clostridium perfringens (strain ATCC 13124 / DSM 756 / JCM 1290 / NCIMB 6125 / NCTC 8237 / Type A), this protein is Small ribosomal subunit protein uS4B.